Consider the following 152-residue polypeptide: uncharacterized protein (152 aa).

This is an uncharacterized protein from Mycobacterium tuberculosis (strain ATCC 25618 / H37Rv).